Here is a 71-residue protein sequence, read N- to C-terminus: Small ribosomal subunit protein bS21 (71 aa).

This sequence belongs to the bacterial ribosomal protein bS21 family.

In Shewanella woodyi (strain ATCC 51908 / MS32), this protein is Small ribosomal subunit protein bS21.